The chain runs to 1323 residues: Lysine-specific demethylase 3A (1323 aa).

Disordered stretches follow at residues 255–287, 307–337, and 385–416; these read TRTG…PSMC, ATPS…PQGC, and SEPK…GLPK. Ser-264 carries the phosphoserine modification. Composition is skewed to polar residues over residues 266–283 and 307–327; these read ENNG…SEAS and ATPS…NSPP. Ser-325 carries the post-translational modification Phosphoserine. Ser-446 bears the Phosphoserine mark. Disordered regions lie at residues 468–487 and 495–517; these read AEKK…LKET and SCCT…LTDP. Polar residues-rich tracts occupy residues 477–486 and 495–507; these read LGSQSQNLKE and SCCT…TQTP. The C6-type zinc finger occupies 662-687; sequence CDVCDTTIFNLHWVCPRCGFGVCVDC. Residues 885 to 889 carry the LXXLL motif motif; it reads LRNLL. Position 895 is an N6-acetyllysine (Lys-895). A JmjC domain is found at 1060–1283; it reads MPSRFDDLMA…HCFWLTQEFR (224 aa). The Fe cation site is built by His-1122, Asp-1124, and His-1251.

The protein belongs to the JHDM2 histone demethylase family. In terms of assembly, interacts with VRK1. It depends on Fe(2+) as a cofactor. Highly expressed in testis (at protein level). Also expressed at high levels in tissues responsive to sympathetic nerve activity such as brown adipose tissue and skeletal muscle.

Its subcellular location is the cytoplasm. It is found in the nucleus. It carries out the reaction N(6),N(6)-dimethyl-L-lysyl(9)-[histone H3] + 2 2-oxoglutarate + 2 O2 = L-lysyl(9)-[histone H3] + 2 formaldehyde + 2 succinate + 2 CO2. Histone demethylase that specifically demethylates 'Lys-9' of histone H3, thereby playing a central role in histone code. Preferentially demethylates mono- and dimethylated H3 'Lys-9' residue, with a preference for dimethylated residue, while it has weak or no activity on trimethylated H3 'Lys-9'. Demethylation of Lys residue generates formaldehyde and succinate. Involved in hormone-dependent transcriptional activation, by participating in recruitment to androgen-receptor target genes, resulting in H3 'Lys-9' demethylation and transcriptional activation. Involved in spermatogenesis by regulating expression of target genes such as PRM1 and TNP1 which are required for packaging and condensation of sperm chromatin. Involved in obesity resistance through regulation of metabolic genes such as PPARA and UCP1. This Mus musculus (Mouse) protein is Lysine-specific demethylase 3A (Kdm3a).